The chain runs to 322 residues: ATP-dependent 6-phosphofructokinase (322 aa).

ATP is bound at residue G11. R21 to R25 lines the ADP pocket. Residues R72–C73 and G102–S105 each bind ATP. Residue D103 coordinates Mg(2+). Position 127–129 (T127–D129) interacts with substrate. The active-site Proton acceptor is the D129. R156 contributes to the ADP binding site. Substrate is bound by residues R164 and M171–R173. ADP contacts are provided by residues G187–E189, R213, and K215–H217. Substrate-binding positions include E224, R245, and H251–R254.

This sequence belongs to the phosphofructokinase type A (PFKA) family. ATP-dependent PFK group I subfamily. Prokaryotic clade 'B1' sub-subfamily. In terms of assembly, homotetramer. Requires Mg(2+) as cofactor.

It localises to the cytoplasm. The enzyme catalyses beta-D-fructose 6-phosphate + ATP = beta-D-fructose 1,6-bisphosphate + ADP + H(+). It functions in the pathway carbohydrate degradation; glycolysis; D-glyceraldehyde 3-phosphate and glycerone phosphate from D-glucose: step 3/4. Allosterically activated by ADP and other diphosphonucleosides, and allosterically inhibited by phosphoenolpyruvate. Functionally, catalyzes the phosphorylation of D-fructose 6-phosphate to fructose 1,6-bisphosphate by ATP, the first committing step of glycolysis. This Staphylococcus aureus (strain MRSA252) protein is ATP-dependent 6-phosphofructokinase.